Reading from the N-terminus, the 296-residue chain is uncharacterized protein (296 aa).

The next 2 helical transmembrane spans lie at 82-102 (VVAP…WSVQ) and 117-137 (ISVL…SAIF).

Its subcellular location is the cell membrane. This is an uncharacterized protein from Sinorhizobium fredii (strain NBRC 101917 / NGR234).